The following is a 175-amino-acid chain: Bifunctional protein PyrR (175 aa).

Substrate is bound by residues 40–41 (TR), 102–110 (DDVLYTGRT), R135, and V159. The PRPP-binding motif lies at 98 to 110 (VVIIDDVLYTGRT).

The protein belongs to the purine/pyrimidine phosphoribosyltransferase family. PyrR subfamily. In terms of assembly, homodimer and homohexamer; in equilibrium.

It carries out the reaction UMP + diphosphate = 5-phospho-alpha-D-ribose 1-diphosphate + uracil. Its function is as follows. Regulates transcriptional attenuation of the pyrimidine nucleotide (pyr) operon by binding in a uridine-dependent manner to specific sites on pyr mRNA. This disrupts an antiterminator hairpin in the RNA and favors formation of a downstream transcription terminator, leading to a reduced expression of downstream genes. In terms of biological role, also displays a weak uracil phosphoribosyltransferase activity which is not physiologically significant. This is Bifunctional protein PyrR from Staphylococcus epidermidis (strain ATCC 12228 / FDA PCI 1200).